The sequence spans 492 residues: N-succinylglutamate 5-semialdehyde dehydrogenase (492 aa).

220 to 225 (GSANTG) serves as a coordination point for NAD(+). Residues E243 and C277 contribute to the active site.

Belongs to the aldehyde dehydrogenase family. AstD subfamily.

The enzyme catalyses N-succinyl-L-glutamate 5-semialdehyde + NAD(+) + H2O = N-succinyl-L-glutamate + NADH + 2 H(+). It participates in amino-acid degradation; L-arginine degradation via AST pathway; L-glutamate and succinate from L-arginine: step 4/5. In terms of biological role, catalyzes the NAD-dependent reduction of succinylglutamate semialdehyde into succinylglutamate. This is N-succinylglutamate 5-semialdehyde dehydrogenase from Escherichia coli O127:H6 (strain E2348/69 / EPEC).